The primary structure comprises 226 residues: 7-cyano-7-deazaguanine synthase (226 aa).

Residue 7–17 participates in ATP binding; it reads LSGGMDSLVTT. Positions 187, 195, 198, and 201 each coordinate Zn(2+).

It belongs to the QueC family. Zn(2+) serves as cofactor.

The enzyme catalyses 7-carboxy-7-deazaguanine + NH4(+) + ATP = 7-cyano-7-deazaguanine + ADP + phosphate + H2O + H(+). It functions in the pathway purine metabolism; 7-cyano-7-deazaguanine biosynthesis. In terms of biological role, catalyzes the ATP-dependent conversion of 7-carboxy-7-deazaguanine (CDG) to 7-cyano-7-deazaguanine (preQ(0)). The chain is 7-cyano-7-deazaguanine synthase from Chlorobium phaeobacteroides (strain DSM 266 / SMG 266 / 2430).